A 267-amino-acid polypeptide reads, in one-letter code: Mitochondrial S-adenosylmethionine carrier protein (267 aa).

3 Solcar repeats span residues 4-77 (REFT…TKSV), 86-168 (LAPI…LKAV), and 177-265 (LDSW…VRRT). Helical transmembrane passes span 5 to 25 (EFTASLVAGGCAGMCVDLTLF), 49 to 69 (IYAGVPSAAIGSFPNAAAFFV), 85 to 105 (NLAPITHMLAASLGEIVACLI), 142 to 162 (RGYGSTVLREIPFSLVQFPLW), 182 to 202 (AAVCGALAGGVAAFVTTPLDV), and 238 to 258 (FAGSIPRVMFISMGGFIFLGA).

The protein belongs to the mitochondrial carrier (TC 2.A.29) family.

The protein localises to the mitochondrion inner membrane. It carries out the reaction S-adenosyl-L-homocysteine(out) + S-adenosyl-L-methionine(in) = S-adenosyl-L-homocysteine(in) + S-adenosyl-L-methionine(out). Its function is as follows. Mitochondrial S-adenosyl-L-methionine/S-adenosyl-L-homocysteine antiporter. Mediates the exchange of cytosolic S-adenosyl-L-methionine, the predominant methyl-group donor for macromolecule methylation processes, for mitochondrial S-adenosylhomocysteine(SAH), a by-product of methylation reactions. The protein is Mitochondrial S-adenosylmethionine carrier protein (slc25a26) of Danio rerio (Zebrafish).